We begin with the raw amino-acid sequence, 150 residues long: MQIWVDADACPNVIKEVLFRAADRTQMQVTLVANQTIKVPPSRFISTLRVAAGFDVADNEIVRSVESGDLVITADIPLASEVIEKGGIALNPRGERYTPDTIRERLNMRDFMDTMRASGIQTGGPSTLNQRDRQQFANELDKWLQQVRKS.

The protein belongs to the UPF0178 family.

This is UPF0178 protein ECA0873 from Pectobacterium atrosepticum (strain SCRI 1043 / ATCC BAA-672) (Erwinia carotovora subsp. atroseptica).